The following is a 1164-amino-acid chain: MKKNTDSEMDQRLGYKFLVPDPKAGVFYRPLHFQYVSYSNFILHRLHGILTVKRPLLSFKNNTERIMIEISNVKVTPPDYSPIIASIKGKSYDALATFTVNIFKEVMAKEGISITKISSYEGKDSHLIKIPLLIGYGNKNPLDTAKYLVPNVIGGVFINKQSVEKVGINLVEKITTWPKFRVVKPNSFTFSFSSVSPPNILPTRYRHYKISLDISQLEASNISSTKTFITVNIVLLSQYLSRVSLGFIRRSLSYDMPPEVVYLVNAIIDSAKRLTESITDFNIDTYINDLVEAEHVKQKSQLTINEFKYEMLHNFLPHMNYTPDQLKGFYMISLLRKFLYCIYYTSRYPDRDSMVCHRILTYGKYFETLAHDELENYIGNIRNDIMNNHKNRGTYAVNIHVLTTPGLNHAFSSLLSGKFKKSDGSYRTHPHYSWMQNISIPRSVGFYPDQVKISKMFSVRKYHPSQYLYFCSSDVPERGPQVGLVSQLSVLSSITNILTSEYLDLEKKICEYIRSYYKDDISYFETGFPITIENALVASLNPNMICDFVTDFRRRKRMGFFGNLEVGITLVRDHMNEIRINIGAGRLVRPFLVVDNGELMMDVCPELESRLDDMTFSDIQKEFPHVIEMVDIEQFTFSNVCESVQKFRMMSKDERKQYDLCDFPAEFRDGYVASSLVGINHNSGPRAILGCAQAKQAISCLSSDIRNKIDNGIHLMYPERPIVISKALETSKIAANCFGQHVTIALMSYKGINQEDGIIIKKQFIQRGGLDIVTAKKHQVEIPLENFNNKERDRSNAYSKLESNGLVRLNAFLESGDAMARNISSRTLEDDFARDNQISFDVSEKYTDMYKSRVERVQVELTDKVKVRVLTMKERRPILGDKFTTRTSQKGTVAYIADETELPYDENGITPDVIINSTSIFSRKTISMLIEVILTAAYSAKPYNNKGENRPVCFPSSNETSIDTYMQFAKQCYEHLNPKLTEKELSDKIFCEKILYDPETDKPYASKVFFGPIYYLRLRHLTQDKATVRCRGKKTKLIRQANEGRKRGGGIKFGEMERDCLIAHGAANTITEVLKDSEEDYQDVYICENCGDIAAQIKSINTCLRCSKLNLSPLLTKIDTTHVSKVFLTQMNARGVKVKLDFERRPPSFYKPLDKVDLKPSFLK.

This sequence belongs to the RNA polymerase beta chain family. The DNA-dependent RNA polymerase used for intermediate and late genes expression consists of eight subunits 147 kDa, 133 kDa, 35 kDa, 30 kDa, 22 kDa, 19 kDa, 18 kDa and 7 kDa totalling more than 500 kDa in mass. The same holoenzyme, with the addition of the transcription-specificity factor RAP94, is used for early gene expression.

It localises to the virion. The enzyme catalyses RNA(n) + a ribonucleoside 5'-triphosphate = RNA(n+1) + diphosphate. Functionally, part of the DNA-dependent RNA polymerase which catalyzes the transcription of viral DNA into RNA using the four ribonucleoside triphosphates as substrates. Responsible for the transcription of early, intermediate and late genes. DNA-dependent RNA polymerase associates with the early transcription factor (ETF), itself composed of OPG118 and OPG133, thereby allowing the early genes transcription. Late transcription, and probably also intermediate transcription, require newly synthesized RNA polymerase. The sequence is that of DNA-directed RNA polymerase 133 kDa polypeptide (OPG151) from Homo sapiens (Human).